We begin with the raw amino-acid sequence, 602 residues long: Elongation factor 4 (602 aa).

In terms of domain architecture, tr-type G spans 5–187 (DHIRNFAIIA…QIIVSLPAPE (183 aa)). GTP contacts are provided by residues 17–22 (DHGKST) and 134–137 (NKVD).

It belongs to the TRAFAC class translation factor GTPase superfamily. Classic translation factor GTPase family. LepA subfamily.

It is found in the cell inner membrane. It carries out the reaction GTP + H2O = GDP + phosphate + H(+). Its function is as follows. Required for accurate and efficient protein synthesis under certain stress conditions. May act as a fidelity factor of the translation reaction, by catalyzing a one-codon backward translocation of tRNAs on improperly translocated ribosomes. Back-translocation proceeds from a post-translocation (POST) complex to a pre-translocation (PRE) complex, thus giving elongation factor G a second chance to translocate the tRNAs correctly. Binds to ribosomes in a GTP-dependent manner. The polypeptide is Elongation factor 4 (Pelagibacter ubique (strain HTCC1062)).